The primary structure comprises 440 residues: UDP-N-acetylmuramoylalanine--D-glutamate ligase (440 aa).

128-134 (GTNGKTT) provides a ligand contact to ATP.

This sequence belongs to the MurCDEF family.

The protein localises to the cytoplasm. It catalyses the reaction UDP-N-acetyl-alpha-D-muramoyl-L-alanine + D-glutamate + ATP = UDP-N-acetyl-alpha-D-muramoyl-L-alanyl-D-glutamate + ADP + phosphate + H(+). It functions in the pathway cell wall biogenesis; peptidoglycan biosynthesis. In terms of biological role, cell wall formation. Catalyzes the addition of glutamate to the nucleotide precursor UDP-N-acetylmuramoyl-L-alanine (UMA). In Lawsonia intracellularis (strain PHE/MN1-00), this protein is UDP-N-acetylmuramoylalanine--D-glutamate ligase.